The sequence spans 591 residues: Aspartate--tRNA(Asp/Asn) ligase (591 aa).

L-aspartate is bound at residue E174. The interval 198-201 is aspartate; that stretch reads QLFK. R220 lines the L-aspartate pocket. ATP contacts are provided by residues 220-222 and Q229; that span reads RDE. Residue H450 participates in L-aspartate binding. E483 lines the ATP pocket. L-aspartate is bound at residue R490. 535–538 lines the ATP pocket; sequence GLDR.

The protein belongs to the class-II aminoacyl-tRNA synthetase family. Type 1 subfamily. Homodimer.

The protein resides in the cytoplasm. It catalyses the reaction tRNA(Asx) + L-aspartate + ATP = L-aspartyl-tRNA(Asx) + AMP + diphosphate. Aspartyl-tRNA synthetase with relaxed tRNA specificity since it is able to aspartylate not only its cognate tRNA(Asp) but also tRNA(Asn). Reaction proceeds in two steps: L-aspartate is first activated by ATP to form Asp-AMP and then transferred to the acceptor end of tRNA(Asp/Asn). This is Aspartate--tRNA(Asp/Asn) ligase from Pseudomonas syringae pv. syringae (strain B728a).